Here is a 244-residue protein sequence, read N- to C-terminus: EKC/KEOPS complex subunit Tp53rkb (244 aa).

A Protein kinase domain is found at 24 to 244 (LSGLELVQQG…LRGRKRSMVG (221 aa)). Position 25 is a phosphoserine (serine 25). ATP-binding positions include 30 to 38 (VQQGAEARV) and lysine 51. The short motif at 69 to 86 (RRRTVQEARALLRCRRAG) is the Nuclear localization signal element. Catalysis depends on aspartate 153, which acts as the Proton acceptor.

This sequence belongs to the protein kinase superfamily. BUD32 family. In terms of assembly, component of the EKC/KEOPS complex composed of at least GON7, TP53RK, TPRKB, OSGEP and LAGE3; the whole complex dimerizes.

The protein resides in the nucleus. The enzyme catalyses L-seryl-[protein] + ATP = O-phospho-L-seryl-[protein] + ADP + H(+). It catalyses the reaction L-threonyl-[protein] + ATP = O-phospho-L-threonyl-[protein] + ADP + H(+). In terms of biological role, component of the EKC/KEOPS complex that is required for the formation of a threonylcarbamoyl group on adenosine at position 37 (t(6)A37) in tRNAs that read codons beginning with adenine. The complex is probably involved in the transfer of the threonylcarbamoyl moiety of threonylcarbamoyl-AMP (TC-AMP) to the N6 group of A37. TP53RK has ATPase activity in the context of the EKC/KEOPS complex and likely plays a supporting role to the catalytic subunit OSGEP. Atypical protein kinase that phosphorylates 'Ser-15' of p53/TP53 protein and may therefore participate in its activation. The protein is EKC/KEOPS complex subunit Tp53rkb of Mus musculus (Mouse).